We begin with the raw amino-acid sequence, 802 residues long: E3 ubiquitin-protein ligase UHRF2 (802 aa).

The Ubiquitin-like domain occupies 1-78; the sequence is MWIQVRTIDG…IQLLVRPDPD (78 aa). 2 disordered regions span residues 80-116 and 153-197; these read LPGT…TSAR and RASD…STSN. Polar residues-rich tracts occupy residues 82-96, 153-177, and 188-197; these read GTST…SNSP, RASD…TNGN, and KLDSVPSTSN. Residues 117-311 are required for interaction with histone H3; the sequence is ARLIDPGFGI…VDEIFKIERP (195 aa). The interaction with PCNP stretch occupies residues 194–288; the sequence is STSNSDCVAA…KELRVKIFLG (95 aa). The segment at 344 to 395 adopts a PHD-type zinc-finger fold; that stretch reads SCSCRVCGGKHEPNMQLLCDECNVAYHIYCLNPPLDKVPEEEYWYCPSCKTD. Residues 414–644 are methyl-CpG binding and interaction with HDAC1; the sequence is KMPSASTESR…LQYPAGYPSD (231 aa). The region spanning 448 to 612 is the YDG domain; the sequence is GPIPGIPVGS…FLVWRYLLRR (165 aa). The disordered stretch occupies residues 640–674; sequence GYPSDKEGKKPKGQSKKQPSGTTKRPISDDDCPSA. Phosphoserine is present on serine 667. The RING-type zinc finger occupies 733–772; sequence CVCCQELVYQPVTTECFHNVCKDCLQRSFKAQVFSCPACR.

As to quaternary structure, homodimer; disulfide-linked. Binds methylated CpG containing oligonucleotides. Interacts with H3; the interaction has a preference for the 'Lys-9' trimethylated form of H3 (H3K9me3). Interacts with PCNP. Interacts with HDAC1. Interacts directly with CCNE1; the interaction ubiquitinates CCNE1 and appears independent of CCNE1 phosphorylation. Interacts with CCND1; the interaction ubiquitinates CCND1 and appears independent of CCND1 phosphorylation. Interacts with p53/TP53 and RB1. Interacts with UBE2I. Interacts with ZNF618. Interacts with UHRF1. Interacts with FANCD2. Interacts with ATR. Interacts with PCNA. May be autoubiquitinated; which may lead to proteasomal degradation. In terms of processing, phosphorylated. Phosphorylation may be mediated by CDK2. Post-translationally, autosumoylated.

It localises to the nucleus. The protein localises to the chromosome. It carries out the reaction S-ubiquitinyl-[E2 ubiquitin-conjugating enzyme]-L-cysteine + [acceptor protein]-L-lysine = [E2 ubiquitin-conjugating enzyme]-L-cysteine + N(6)-ubiquitinyl-[acceptor protein]-L-lysine.. It participates in protein modification; protein ubiquitination. With respect to regulation, E3 ligase activity is robustly activated by 5-hydroxymethylcytosine. Its function is as follows. E3 ubiquitin ligase that plays important roles in DNA methylation, histone modifications, cell cycle and DNA repair. Acts as a specific reader for 5-hydroxymethylcytosine (5hmC) and thereby recruits various substrates to these sites to ubiquitinate them. This activity also allows the maintenance of 5mC levels at specific genomic loci and regulates neuron-related gene expression. Participates in cell cycle regulation by ubiquitinating cyclins CCND1 and CCNE1 and thereby inducing G1 arrest. Also ubiquitinates PCNP leading to its degradation by the proteasome. Plays an active role in DNA damage repair by ubiquitinating p21/CDKN1A leading to its proteasomal degradation. Also promotes DNA repair by acting as an interstrand cross-links (ICLs) sensor. Mechanistically, cooperates with UHRF1 to ensure recruitment of FANCD2 to ICLs, leading to FANCD2 monoubiquitination and subsequent activation. Contributes to UV-induced DNA damage response by physically interacting with ATR in response to irradiation, thereby promoting ATR activation. This is E3 ubiquitin-protein ligase UHRF2 (UHRF2) from Homo sapiens (Human).